The primary structure comprises 500 residues: Aspartyl/glutamyl-tRNA(Asn/Gln) amidotransferase subunit B (500 aa).

It belongs to the GatB/GatE family. GatB subfamily. Heterotrimer of A, B and C subunits.

The enzyme catalyses L-glutamyl-tRNA(Gln) + L-glutamine + ATP + H2O = L-glutaminyl-tRNA(Gln) + L-glutamate + ADP + phosphate + H(+). It carries out the reaction L-aspartyl-tRNA(Asn) + L-glutamine + ATP + H2O = L-asparaginyl-tRNA(Asn) + L-glutamate + ADP + phosphate + 2 H(+). Functionally, allows the formation of correctly charged Asn-tRNA(Asn) or Gln-tRNA(Gln) through the transamidation of misacylated Asp-tRNA(Asn) or Glu-tRNA(Gln) in organisms which lack either or both of asparaginyl-tRNA or glutaminyl-tRNA synthetases. The reaction takes place in the presence of glutamine and ATP through an activated phospho-Asp-tRNA(Asn) or phospho-Glu-tRNA(Gln). The polypeptide is Aspartyl/glutamyl-tRNA(Asn/Gln) amidotransferase subunit B (Rhizobium etli (strain CIAT 652)).